The sequence spans 456 residues: MFS-type transporter SLC18B1 (456 aa).

Met1 carries the post-translational modification N-acetylmethionine. The disordered stretch occupies residues 1 to 24; the sequence is MEALGDLEGPRAPGGDDPAGSAGE. The Cytoplasmic portion of the chain corresponds to 1 to 33; the sequence is MEALGDLEGPRAPGGDDPAGSAGETPGWLSREQ. Over residues 10–23 the composition is skewed to low complexity; the sequence is PRAPGGDDPAGSAG. At Ser21 the chain carries Phosphoserine. The chain crosses the membrane as a helical span at residues 34–54; that stretch reads VFVLISAASVNLGSMMCYSIL. Residues 55-70 are Extracellular-facing; that stretch reads GPFFPKEAEKKGASNT. Residues 71-91 traverse the membrane as a helical segment; sequence IIGMIFGCFALFELLASLVFG. Over 92–100 the chain is Cytoplasmic; that stretch reads NYLVHIGAK. A helical transmembrane segment spans residues 101–121; it reads FMFVAGMFVSGGVTILFGVLD. The Extracellular segment spans residues 122–127; sequence RVPDGP. Residues 128–148 traverse the membrane as a helical segment; that stretch reads VFIAMCFLVRVMDAVSFAAAM. The Cytoplasmic portion of the chain corresponds to 149–161; the sequence is TASSSILAKAFPN. The chain crosses the membrane as a helical span at residues 162–184; the sequence is NVATVLGSLETFSGLGLILGPPV. The Extracellular portion of the chain corresponds to 185–195; the sequence is GGFLYQSFGYE. The chain crosses the membrane as a helical span at residues 196–216; the sequence is VPFIVLGCVVLLMVPLNMYIL. The Cytoplasmic portion of the chain corresponds to 217-230; it reads PNYESDPGEHSFWK. A helical transmembrane segment spans residues 231–251; sequence LIALPKVGLIAFVINSLSSCF. Residues 252–272 lie on the Extracellular side of the membrane; sequence GFLDPTLSLFVLEKFNLPAGY. The helical transmembrane segment at 273–293 threads the bilayer; sequence VGLVFLGMALSYAISSPLFGL. The Cytoplasmic portion of the chain corresponds to 294-304; sequence LSDKRPPLRKW. The helical transmembrane segment at 305–325 threads the bilayer; it reads LLVFGNLITAGCYMLLGPVPI. Residues 326–331 are Extracellular-facing; sequence LHIKSQ. The helical transmembrane segment at 332 to 352 threads the bilayer; the sequence is LWLLVLILVVSGLSAGMSIIP. Residues 353-377 are Cytoplasmic-facing; the sequence is TFPEILSCAHENGFEEGLSTLGLVS. Residues 378 to 398 form a helical membrane-spanning segment; the sequence is GLFSAMWSIGAFMGPTLGGFL. The Extracellular portion of the chain corresponds to 399 to 407; sequence YEKIGFEWA. Residues 408–428 traverse the membrane as a helical segment; it reads AAIQGLWALISGLAMGLFYLL. At 429–456 the chain is on the cytoplasmic side; the sequence is EYSRRKRSKSQNILSTEEERTTLLPNET. The residue at position 438 (Ser438) is a Phosphoserine.

The protein belongs to the major facilitator superfamily. As to expression, expressed in various tissues including lung, placenta, adrenal gland, liver, testis, and brain.

Its subcellular location is the cytoplasmic vesicle. The protein localises to the secretory vesicle membrane. The protein resides in the secretory vesicle. It is found in the synaptic vesicle membrane. The enzyme catalyses spermine(in) + n H(+)(out) = spermine(out) + n H(+)(in). It carries out the reaction spermidine(in) + n H(+)(out) = spermidine(out) + n H(+)(in). It catalyses the reaction serotonin(in) + n H(+)(out) = serotonin(out) + n H(+)(in). Functionally, proton-coupled polyamine antiporter involved in the translocation of polyamines from cytosol into secretory vesicles prior to their release via exocytosis. Uses the electrochemical proton gradient generated by a V-type proton-pumping ATPase to couple the efflux of protons with the uptake of a polyamine molecule. Facilitates vesicular storage of spermine and spermidine in astrocytes with an impact on glutamatergic neuronal transmission and memory formation. Upon antigen stimulation, regulates polyamine accumulation and release in mast cell secretory granules, which in turn potentiates mast cell degranulation and histamine secretion. The protein is MFS-type transporter SLC18B1 of Homo sapiens (Human).